Reading from the N-terminus, the 364-residue chain is DNA replication and repair protein RecF (364 aa).

30–37 (GNNAQGKT) is a binding site for ATP.

This sequence belongs to the RecF family.

It is found in the cytoplasm. In terms of biological role, the RecF protein is involved in DNA metabolism; it is required for DNA replication and normal SOS inducibility. RecF binds preferentially to single-stranded, linear DNA. It also seems to bind ATP. This chain is DNA replication and repair protein RecF, found in Streptococcus uberis (strain ATCC BAA-854 / 0140J).